A 458-amino-acid chain; its full sequence is Argininosuccinate lyase (458 aa).

This sequence belongs to the lyase 1 family. Argininosuccinate lyase subfamily.

The protein localises to the cytoplasm. The enzyme catalyses 2-(N(omega)-L-arginino)succinate = fumarate + L-arginine. It functions in the pathway amino-acid biosynthesis; L-arginine biosynthesis; L-arginine from L-ornithine and carbamoyl phosphate: step 3/3. This chain is Argininosuccinate lyase, found in Trichlorobacter lovleyi (strain ATCC BAA-1151 / DSM 17278 / SZ) (Geobacter lovleyi).